The primary structure comprises 391 residues: Processive diacylglycerol beta-glucosyltransferase (391 aa).

Belongs to the glycosyltransferase 28 family. UgtP subfamily.

Its subcellular location is the cell membrane. The catalysed reaction is a 1,2-diacyl-3-O-(beta-D-glucopyranosyl)-sn-glycerol + UDP-alpha-D-glucose = a 1,2-diacyl-3-O-(beta-D-Glc-(1-&gt;6)-beta-D-Glc)-sn-glycerol + UDP + H(+). The enzyme catalyses a 1,2-diacyl-sn-glycerol + UDP-alpha-D-glucose = a 1,2-diacyl-3-O-(beta-D-glucopyranosyl)-sn-glycerol + UDP + H(+). It participates in glycolipid metabolism; diglucosyl-diacylglycerol biosynthesis. Its function is as follows. Processive glucosyltransferase involved in the biosynthesis of both the bilayer- and non-bilayer-forming membrane glucolipids. Is able to successively transfer two glucosyl residues to diacylglycerol (DAG), thereby catalyzing the formation of beta-monoglucosyl-DAG (3-O-(beta-D-glucopyranosyl)-1,2-diacyl-sn-glycerol) and beta-diglucosyl-DAG (3-O-(beta-D-glucopyranosyl-beta-(1-&gt;6)-D-glucopyranosyl)-1,2-diacyl-sn-glycerol). Beta-diglucosyl-DAG is the predominant glycolipid found in Bacillales and is also used as a membrane anchor for lipoteichoic acid (LTA). The polypeptide is Processive diacylglycerol beta-glucosyltransferase (Staphylococcus aureus (strain bovine RF122 / ET3-1)).